The primary structure comprises 431 residues: MKKLTFHPDDSVHAFITTIPEVTYGDGPLSGVTVAVKDNISTKGIETTCASKILKGYIPPYDAHVVTLLKNAGAAIVGKTNMDEFGMGTTTENSAYGPTLNPLDHQRVPGGSSGGSAAAVAAGLVDCAIGSDTGGSIRCPAAFCGIVGLKPTYGRVSRFGLIAYANSLEQIGPMARDVQTLSNLYSVIAGHDSRDATSVDKPYKHNPVSDITGLKIGVPDEFFGEGVNPNVAEVVRQAIDTLESMGATAVPCTIPSMKYALSAYYVTCTSEASSNLARFDGVRYGPAVGTLKSWHDAYSEQRKAGFGKEVRRRIILGTFSLAAGYYGRYYQKAQTARQMVRDDFERIFRDVDVIAGPTMPDIAFKLGEKSDPLQMYLSDILTVPANLAGVPALSVPCGKINSMPVGLQLIGRYFEDERIIDTAYAYEQGRA.

Catalysis depends on charge relay system residues lysine 37 and serine 112. Serine 136 functions as the Acyl-ester intermediate in the catalytic mechanism.

Belongs to the amidase family. GatA subfamily. As to quaternary structure, heterotrimer of A, B and C subunits.

The catalysed reaction is L-glutamyl-tRNA(Gln) + L-glutamine + ATP + H2O = L-glutaminyl-tRNA(Gln) + L-glutamate + ADP + phosphate + H(+). Its function is as follows. Allows the formation of correctly charged Gln-tRNA(Gln) through the transamidation of misacylated Glu-tRNA(Gln) in organisms which lack glutaminyl-tRNA synthetase. The reaction takes place in the presence of glutamine and ATP through an activated gamma-phospho-Glu-tRNA(Gln). This is Glutamyl-tRNA(Gln) amidotransferase subunit A from Methanospirillum hungatei JF-1 (strain ATCC 27890 / DSM 864 / NBRC 100397 / JF-1).